Here is a 387-residue protein sequence, read N- to C-terminus: Alpha-maltose-1-phosphate synthase (387 aa).

This sequence belongs to the glycosyltransferase group 1 family.

The catalysed reaction is ADP-alpha-D-glucose + alpha-D-glucose 1-phosphate = alpha-maltose 1-phosphate + ADP + H(+). Its pathway is glycan biosynthesis; glycogen biosynthesis. Functionally, involved in the biosynthesis of the maltose-1-phosphate (M1P) building block required for alpha-glucan production by the key enzyme GlgE. Catalyzes the formation of an alpha-1,4 linkage between glucose from ADP-glucose and glucose 1-phosphate (G1P) to yield maltose-1-phosphate (M1P). In Mycolicibacterium smegmatis (strain ATCC 700084 / mc(2)155) (Mycobacterium smegmatis), this protein is Alpha-maltose-1-phosphate synthase.